The primary structure comprises 240 residues: Ubiquinone biosynthesis O-methyltransferase (240 aa).

S-adenosyl-L-methionine is bound by residues arginine 44, glycine 64, aspartate 85, and methionine 129.

The protein belongs to the methyltransferase superfamily. UbiG/COQ3 family.

It catalyses the reaction a 3-demethylubiquinol + S-adenosyl-L-methionine = a ubiquinol + S-adenosyl-L-homocysteine + H(+). The enzyme catalyses a 3-(all-trans-polyprenyl)benzene-1,2-diol + S-adenosyl-L-methionine = a 2-methoxy-6-(all-trans-polyprenyl)phenol + S-adenosyl-L-homocysteine + H(+). It participates in cofactor biosynthesis; ubiquinone biosynthesis. Its function is as follows. O-methyltransferase that catalyzes the 2 O-methylation steps in the ubiquinone biosynthetic pathway. This chain is Ubiquinone biosynthesis O-methyltransferase, found in Escherichia coli O9:H4 (strain HS).